We begin with the raw amino-acid sequence, 1150 residues long: Voltage-dependent calcium channel subunit alpha-2/delta-2 (1150 aa).

The first 18 residues, 1-18 (MAVPARTCGASRPGPART), serve as a signal peptide directing secretion. The interval 1–41 (MAVPARTCGASRPGPARTARPWPGCGPHPGPGTRRPTSGPP) is disordered. Residues 19 to 1113 (ARPWPGCGPH…TEDTSDCGRG (1095 aa)) lie on the Extracellular side of the membrane. Residues 291 to 469 (DMVIIVDVSG…INTQEYLDVL (179 aa)) form the VWFA domain. The a divalent metal cation site is built by D297, S299, and S301. The short motif at 297–301 (DVSGS) is the MIDAS-like motif element. Residues N386, N418, N507, N540, N624, and N861 are each glycosylated (N-linked (GlcNAc...) asparagine). The cysteines at positions 443 and 1098 are disulfide-linked. The region spanning 485-574 (WTNVYEDALG…KPQTTNFREP (90 aa)) is the Cache domain. The helical transmembrane segment at 1114 to 1134 (ASFPPSLGVLVSLQLLLLLGL) threads the bilayer. The Cytoplasmic segment spans residues 1135–1150 (PPRPQPQVLVHASRRL).

Belongs to the calcium channel subunit alpha-2/delta family. Dimer formed of alpha-2-2 and delta-2 chains; disulfide-linked. Voltage-dependent calcium channels are multisubunit complexes, consisting of alpha-1 (CACNA1), alpha-2 (CACNA2D), beta (CACNB) and delta (CACNA2D) subunits in a 1:1:1:1 ratio. May be proteolytically processed into subunits alpha-2-2 and delta-2 that are disulfide-linked. It is however unclear whether such cleavage really takes place in vivo and has a functional role. In terms of tissue distribution, predominantly present in cerebellar cortex. Present in various lung tumor cell lines, while it is absent in normal lung (at protein level). Highly expressed in heart, lung, testis, pancreas and skeletal muscle. Also expressed in kidney, liver, placenta and brain.

The protein localises to the membrane. Its function is as follows. The alpha-2/delta subunit of voltage-dependent calcium channels regulates calcium current density and activation/inactivation kinetics of the calcium channel. Acts as a regulatory subunit for P/Q-type calcium channel (CACNA1A), N-type (CACNA1B), L-type (CACNA1C OR CACNA1D) and possibly T-type (CACNA1G). Overexpression induces apoptosis. In Homo sapiens (Human), this protein is Voltage-dependent calcium channel subunit alpha-2/delta-2 (CACNA2D2).